The primary structure comprises 919 residues: Valine--tRNA ligase (919 aa).

The 'HIGH' region signature appears at 46–56; it reads PNVTGTLHMGH. A 'KMSKS' region motif is present at residues 528–532; sequence KMSKS. ATP is bound at residue lysine 531. Positions 849–919 form a coiled coil; that stretch reads LAGLVDIEAE…KTLEKKEALG (71 aa).

This sequence belongs to the class-I aminoacyl-tRNA synthetase family. ValS type 1 subfamily. Monomer.

It is found in the cytoplasm. It catalyses the reaction tRNA(Val) + L-valine + ATP = L-valyl-tRNA(Val) + AMP + diphosphate. In terms of biological role, catalyzes the attachment of valine to tRNA(Val). As ValRS can inadvertently accommodate and process structurally similar amino acids such as threonine, to avoid such errors, it has a 'posttransfer' editing activity that hydrolyzes mischarged Thr-tRNA(Val) in a tRNA-dependent manner. The polypeptide is Valine--tRNA ligase (Francisella tularensis subsp. tularensis (strain SCHU S4 / Schu 4)).